Here is a 96-residue protein sequence, read N- to C-terminus: Co-chaperonin GroES (96 aa).

Belongs to the GroES chaperonin family. As to quaternary structure, heptamer of 7 subunits arranged in a ring. Interacts with the chaperonin GroEL.

The protein localises to the cytoplasm. Its function is as follows. Together with the chaperonin GroEL, plays an essential role in assisting protein folding. The GroEL-GroES system forms a nano-cage that allows encapsulation of the non-native substrate proteins and provides a physical environment optimized to promote and accelerate protein folding. GroES binds to the apical surface of the GroEL ring, thereby capping the opening of the GroEL channel. This is Co-chaperonin GroES from Methylorubrum populi (strain ATCC BAA-705 / NCIMB 13946 / BJ001) (Methylobacterium populi).